The primary structure comprises 106 residues: Small ribosomal subunit protein mS33 (106 aa).

S2 is modified (N-acetylserine). The segment covering 85–94 (LKKLRGKVKP) has biased composition (basic residues). The segment at 85-106 (LKKLRGKVKPRKGEGKRAAKKK) is disordered. Residues 95 to 106 (RKGEGKRAAKKK) are compositionally biased toward basic and acidic residues.

This sequence belongs to the mitochondrion-specific ribosomal protein mS33 family. Component of the mitochondrial ribosome small subunit (28S) which comprises a 12S rRNA and about 30 distinct proteins.

It localises to the mitochondrion. This Bos taurus (Bovine) protein is Small ribosomal subunit protein mS33.